The primary structure comprises 80 residues: Iota-conotoxin-like r11c (80 aa).

Residues 1-19 (MKLCLTFLLVLMILASVTG) form the signal peptide. Positions 20 to 35 (EKSSKHTLSRAARVKN) are excised as a propeptide. 2 positions are modified to 4-hydroxyproline; partial: proline 38 and proline 47. 4 cysteine pairs are disulfide-bonded: cysteine 41-cysteine 55, cysteine 48-cysteine 58, cysteine 54-cysteine 63, and cysteine 57-cysteine 72. The residue at position 65 (proline 65) is a 4-hydroxyproline. At leucine 78 the chain carries D-leucine. Arginine 80 is a propeptide (removed by a carboxypeptidase).

In terms of processing, the natural D-Leu form of the peptide is more potent than the synthetic L-Leu form. Expressed by the venom duct.

It localises to the secreted. Functionally, iota-conotoxins bind to voltage-gated sodium channels (Nav) and act as agonists by shifting the voltage-dependence of activation to more hyperpolarized levels. Causes circular motion, convulsions, copious urination, rigid paralysis and death upon intracranial injection into mice. Causes unbalanced swimming, swimming in diagonal and vertical motion and death, when injected intraperitoneally into goldfish. L-Leu and D-Leu forms are active on both nerve and muscle. The polypeptide is Iota-conotoxin-like r11c (Conus radiatus (Rayed cone)).